A 248-amino-acid chain; its full sequence is Glycoprotein BILF2 (248 aa).

The N-terminal stretch at 1-17 is a signal peptide; it reads MTHLVLLLCCCVGSVCA. The Ig-like domain occupies 19 to 125; sequence FSDLVKFENV…NVTLRNCSVA (107 aa). Residues N27, N37, N45, N73, N83, N92, N95, N104, N116, N121, N131, and N144 are each glycosylated (N-linked (GlcNAc...) asparagine; by host). A disulfide bridge connects residues C40 and C115. The segment at 167–191 is disordered; that stretch reads VSHTTSTSHRPHRRPVSKRPTHKPV. A compositionally biased stretch (basic residues) spans 175–188; sequence HRPHRRPVSKRPTH. Residues 210–230 form a helical membrane-spanning segment; the sequence is WALLLITCAVVAPVLLIIIIS.

This sequence belongs to the Epstein-Barr virus BILF2 protein family.

It localises to the membrane. This is Glycoprotein BILF2 from Epstein-Barr virus (strain B95-8) (HHV-4).